Reading from the N-terminus, the 382-residue chain is Heme A synthase (382 aa).

A run of 8 helical transmembrane segments spans residues 25 to 45 (GAVR…VAVG), 112 to 132 (LLGR…WARG), 138 to 158 (LLLG…IGWI), 176 to 196 (LALH…LAAG), 211 to 231 (VVAG…GLVA), 270 to 290 (LALV…VAIA), 303 to 323 (AAAG…GLGI), and 327 to 347 (LLHV…AVLI). His-277 is a heme binding site. His-338 serves as a coordination point for heme.

The protein belongs to the COX15/CtaA family. Type 2 subfamily. As to quaternary structure, interacts with CtaB. It depends on heme b as a cofactor.

The protein localises to the cell membrane. The enzyme catalyses Fe(II)-heme o + 2 A + H2O = Fe(II)-heme a + 2 AH2. It participates in porphyrin-containing compound metabolism; heme A biosynthesis; heme A from heme O: step 1/1. In terms of biological role, catalyzes the conversion of heme O to heme A by two successive hydroxylations of the methyl group at C8. The first hydroxylation forms heme I, the second hydroxylation results in an unstable dihydroxymethyl group, which spontaneously dehydrates, resulting in the formyl group of heme A. The protein is Heme A synthase of Methylorubrum extorquens (strain PA1) (Methylobacterium extorquens).